Here is a 674-residue protein sequence, read N- to C-terminus: CRS2-associated factor 1, chloroplastic (674 aa).

Residues 1-54 (MATARLPSRSFLSPAQQSYPRLPASVRLCLSHHEQPPTGPKRHRRAATSHPAFS) constitute a chloroplast transit peptide. The interval 31-61 (SHHEQPPTGPKRHRRAATSHPAFSAAARGRA) is disordered. A compositionally biased stretch (low complexity) spans 48–57 (TSHPAFSAAA). 2 consecutive CRM domains span residues 183–279 (EPLT…TRPC) and 301–397 (GGLT…LPPL). The tract at residues 554–576 (GLLCLLEQAIHSGRALVLSEDEL) is CRS2 binding.

Interacts with CRS2 and RNA. Part of large ribonucleo-protein complexes that include group IIB introns, CRS2 and CAF1.

It is found in the plastid. The protein localises to the chloroplast stroma. Required for the splicing of group IIB introns in chloroplasts. Forms splicing particles with CRS2. Interacts with RNA and confers intron specificity of the splicing particles. This chain is CRS2-associated factor 1, chloroplastic (CAF1), found in Zea mays (Maize).